The chain runs to 471 residues: FAD-linked oxidoreductase sorD (471 aa).

Positions 1–23 (MQAASAFATCLLASVGGNSSAVA) are cleaved as a signal peptide. N-linked (GlcNAc...) asparagine glycosylation is found at asparagine 18, asparagine 29, asparagine 174, asparagine 279, and asparagine 351. Residues 41 to 212 (LLTTPSAIVW…TDFSIRTEPV (172 aa)) form the FAD-binding PCMH-type domain.

This sequence belongs to the oxygen-dependent FAD-linked oxidoreductase family. Requires FAD as cofactor.

It functions in the pathway secondary metabolite biosynthesis. FAD-linked oxidoreductase; part of the gene cluster that mediates the biosynthesis of sorbicillinoids, a diverse group of yellow secondary metabolites that restrict growth of competing pathogenic fungi but not of bacteria. Sorbicillinoids biosynthesis requires the action of two PKSs. SorA iteratively combines three acetyl units and the growing chain is modified by the ketoacyl reductase subunit, and optional by the enoyl reductase subunit in the second cycle. The polyketide is then handed over to the PKS SorB, which adds three more acetyl units, and two methyl groups. SorB releases an aldehyde, which undergoes spontaneous cyclization resulting in the formation of sorbicillin or 2',3'-dihydrosorbicillin. The monooxygenase sorC oxidizes sorbicillin and 2',3'-dihydrosorbicillin to 2',3'-dihydrosorbicillinol and sorbicillinol, respectively. The oxidoreductase sorD further converts sorbicillinol into oxosorbicillinol. Sorbicillinol is the building block for the other sorbicillinoids such as disorbicillinol, bisvertinolon, and dihydrobisvertinolone. This Penicillium rubens (strain ATCC 28089 / DSM 1075 / NRRL 1951 / Wisconsin 54-1255) (Penicillium chrysogenum) protein is FAD-linked oxidoreductase sorD.